A 756-amino-acid polypeptide reads, in one-letter code: Ent-kaur-16-ene synthase, chloroplastic (756 aa).

Asp-496, Asp-500, Asn-639, and Glu-647 together coordinate Mg(2+). Residues 496-500 (DDFFD) carry the DDXXD motif motif.

The protein belongs to the terpene synthase family. It depends on Mg(2+) as a cofactor. As to expression, highly expressed in panicles and at lower levels in leaves and stems.

Its subcellular location is the plastid. It is found in the chloroplast. It carries out the reaction ent-copalyl diphosphate = ent-kaur-16-ene + diphosphate. It functions in the pathway plant hormone biosynthesis; gibberellin biosynthesis. Its function is as follows. Catalyzes the conversion of ent-copalyl diphosphate to the gibberellin precursor ent-kaur-16-ene. The polypeptide is Ent-kaur-16-ene synthase, chloroplastic (KS1) (Oryza sativa subsp. japonica (Rice)).